We begin with the raw amino-acid sequence, 330 residues long: Alpha-1,6-glucosyltransferase (330 aa).

The protein belongs to the glycosyltransferase group 1 family. Does not require a metal cofactor. serves as cofactor.

Its subcellular location is the cytoplasm. It functions in the pathway protein modification; protein glycosylation. Catalyzes the transfer of a glucose moiety from UDP-glucose to another glucose that is N-linked to an asparagine within a peptide or protein. Can act in a repetitive manner, and this way it elongates the N-linked glucose by a glycan chain consisting of several alpha-1-&gt;6 linked glucose residues. Is able to add up to six glucose units in vitro. Cannot use UDP-Gal, UDP-GlcNAc or UDP-GalNAc as a substrate donor. The chain is Alpha-1,6-glucosyltransferase from Actinobacillus pleuropneumoniae serotype 7 (strain AP76).